We begin with the raw amino-acid sequence, 155 residues long: MESLQTPQHRENQDKREKEYGVKHMPMGNNAGNLEPEKRKAVRVALSSATAAQNIPSSVHCGCSKQWRLRLPSESLQSRGQVMKRPNNILKLRNLDLLIYPWPELRRRQVASDLMSLLLLPAFSGLTWAPFLFLFTYLPPFLNLLTVGFVSYFLV.

A disordered region spans residues 1 to 34 (MESLQTPQHRENQDKREKEYGVKHMPMGNNAGNL). Residues 8-22 (QHRENQDKREKEYGV) show a composition bias toward basic and acidic residues. Residues 115 to 135 (MSLLLLPAFSGLTWAPFLFLF) traverse the membrane as a helical segment.

The protein resides in the membrane. This is an uncharacterized protein from Homo sapiens (Human).